Here is a 205-residue protein sequence, read N- to C-terminus: ATP-dependent Clp protease proteolytic subunit 2 (205 aa).

Catalysis depends on S100, which acts as the Nucleophile. H125 is an active-site residue.

Belongs to the peptidase S14 family. As to quaternary structure, fourteen ClpP subunits assemble into 2 heptameric rings which stack back to back to give a disk-like structure with a central cavity, resembling the structure of eukaryotic proteasomes.

The protein localises to the cytoplasm. The enzyme catalyses Hydrolysis of proteins to small peptides in the presence of ATP and magnesium. alpha-casein is the usual test substrate. In the absence of ATP, only oligopeptides shorter than five residues are hydrolyzed (such as succinyl-Leu-Tyr-|-NHMec, and Leu-Tyr-Leu-|-Tyr-Trp, in which cleavage of the -Tyr-|-Leu- and -Tyr-|-Trp bonds also occurs).. Cleaves peptides in various proteins in a process that requires ATP hydrolysis. Has a chymotrypsin-like activity. Plays a major role in the degradation of misfolded proteins. The sequence is that of ATP-dependent Clp protease proteolytic subunit 2 from Chlamydia abortus (strain DSM 27085 / S26/3) (Chlamydophila abortus).